An 82-amino-acid chain; its full sequence is Diptericin-A (82 aa).

Disordered regions lie at residues 1-32 (DEKPKLILPTPAPPNLPQLVGGGGGNRKDGFG) and 45-69 (DNGGHSIGVSPGYSQHLPGPYGNSR). A Phenylalanine amide modification is found at Phe-82.

It belongs to the attacin/sarcotoxin-2 family.

Its subcellular location is the secreted. Antimicrobial peptide required to resist Gram-negative bacterial infections, regulated by Dredd. This Protophormia terraenovae (Northern blowfly) protein is Diptericin-A.